We begin with the raw amino-acid sequence, 175 residues long: Nucleoside-triphosphatase THEP1 (175 aa).

ATP contacts are provided by residues Gly-8 to Ser-15 and Leu-99 to Gly-106.

Belongs to the THEP1 NTPase family.

It carries out the reaction a ribonucleoside 5'-triphosphate + H2O = a ribonucleoside 5'-diphosphate + phosphate + H(+). Functionally, has nucleotide phosphatase activity towards ATP, GTP, CTP, TTP and UTP. May hydrolyze nucleoside diphosphates with lower efficiency. In Methanosarcina acetivorans (strain ATCC 35395 / DSM 2834 / JCM 12185 / C2A), this protein is Nucleoside-triphosphatase THEP1.